The primary structure comprises 276 residues: Radial spoke head protein 9 homolog (276 aa).

It belongs to the flagellar radial spoke RSP9 family. In terms of assembly, component of the axonemal radial spoke 1 (RS1) and 2 (RS2) complexes, at least composed of spoke head proteins RSPH1, RSPH3, RSPH9 and the cilia-specific component RSPH4A or sperm-specific component RSPH6A, spoke stalk proteins RSPH14, DNAJB13, DYDC1, ROPN1L and NME5, and the RS1 complex-specific anchor protein IQUB. Interacts with IQUB. Interacts with RSPH3B. Interacts with RSPH4A. Interacts with RSPH6A. Interacts with CFAP61. Interacts with LRRC23.

It localises to the cytoplasm. The protein localises to the cytoskeleton. The protein resides in the cilium axoneme. It is found in the flagellum axoneme. Its subcellular location is the cell projection. It localises to the kinocilium. Functions as part of axonemal radial spoke complexes that play an important part in the motility of sperm and cilia. Essential for both the radial spoke head assembly and the central pair microtubule stability in ependymal motile cilia. Required for motility of olfactory and neural cilia and for the structural integrity of ciliary axonemes in both 9+0 and 9+2 motile cilia. This is Radial spoke head protein 9 homolog (RSPH9) from Bos taurus (Bovine).